A 224-amino-acid chain; its full sequence is Synaptogyrin-2 (224 aa).

Met-1 is modified (N-acetylmethionine). Ser-3 carries the post-translational modification Phosphoserine. One can recognise an MARVEL domain in the interval 20 to 171 (FLSQPQVVTR…LASLAYQRYK (152 aa)). 4 helical membrane passes run 31–51 (VSMV…YTNI), 72–92 (SAIG…DAFF), 105–125 (VIGD…GFCF), and 147–167 (AAIT…SLAY).

This sequence belongs to the synaptogyrin family. Post-translationally, may be tyrosine phosphorylated by Src.

It localises to the cytoplasmic vesicle membrane. The protein localises to the cytoplasmic vesicle. Its subcellular location is the secretory vesicle. The protein resides in the synaptic vesicle membrane. Its function is as follows. May play a role in regulated exocytosis. In neuronal cells, modulates the localization of synaptophysin/SYP into synaptic-like microvesicles and may therefore play a role in the formation and/or the maturation of this vesicles. May also play a role in GLUT4 storage and transport to the plasma membrane. The protein is Synaptogyrin-2 of Mus musculus (Mouse).